Consider the following 107-residue polypeptide: Integration host factor subunit beta (107 aa).

Residues 55 to 107 (RRPARVGRNPKSGEKVQVPEKHVPHFKPGKELRERVDGRAGEPLKNDEPEDAQ) form a disordered region. A compositionally biased stretch (basic and acidic residues) spans 65-101 (KSGEKVQVPEKHVPHFKPGKELRERVDGRAGEPLKND).

Belongs to the bacterial histone-like protein family. As to quaternary structure, heterodimer of an alpha and a beta chain.

Functionally, this protein is one of the two subunits of integration host factor, a specific DNA-binding protein that functions in genetic recombination as well as in transcriptional and translational control. This is Integration host factor subunit beta from Burkholderia pseudomallei (strain K96243).